The primary structure comprises 317 residues: (R)-citramalyl-CoA lyase (317 aa).

Residues 4 to 281 (VTIVDVAPRD…PTGIDLSALI (278 aa)) enclose the Pyruvate carboxyltransferase domain. Arg-12 serves as a coordination point for substrate. Asp-13, His-214, and His-216 together coordinate a divalent metal cation. Cys-247 is a catalytic residue. Residue Asn-256 participates in a divalent metal cation binding.

It belongs to the HMG-CoA lyase family. In terms of assembly, homodimer. Requires Mn(2+) as cofactor. Co(2+) is required as a cofactor. It depends on Ni(2+) as a cofactor. Mg(2+) serves as cofactor.

The enzyme catalyses (3R)-citramalyl-CoA = pyruvate + acetyl-CoA. Activated by dithioerythritol (DTE) (in vitro). Functionally, involved in the glyoxylate assimilation cycle used to regenerate acetyl-CoA and produce pyruvate as universal precursor for biosynthesis. Catalyzes the cleavage of (R)-citramalyl-CoA to yield acetyl-CoA and pyruvate. This Chloroflexus aurantiacus (strain ATCC 29366 / DSM 635 / J-10-fl) protein is (R)-citramalyl-CoA lyase (ccl).